A 238-amino-acid polypeptide reads, in one-letter code: Peptidyl-tRNA hydrolase (238 aa).

Tyrosine 14 lines the tRNA pocket. Catalysis depends on histidine 19, which acts as the Proton acceptor. TRNA is bound by residues tyrosine 64, asparagine 66, and asparagine 112. Residues 202–225 are disordered; the sequence is PAAQSHIHQARNSAQPKKLPETGP. Over residues 207–216 the composition is skewed to polar residues; it reads HIHQARNSAQ.

This sequence belongs to the PTH family. As to quaternary structure, monomer.

The protein resides in the cytoplasm. The enzyme catalyses an N-acyl-L-alpha-aminoacyl-tRNA + H2O = an N-acyl-L-amino acid + a tRNA + H(+). Hydrolyzes ribosome-free peptidyl-tRNAs (with 1 or more amino acids incorporated), which drop off the ribosome during protein synthesis, or as a result of ribosome stalling. Functionally, catalyzes the release of premature peptidyl moieties from peptidyl-tRNA molecules trapped in stalled 50S ribosomal subunits, and thus maintains levels of free tRNAs and 50S ribosomes. This Agrobacterium fabrum (strain C58 / ATCC 33970) (Agrobacterium tumefaciens (strain C58)) protein is Peptidyl-tRNA hydrolase.